The primary structure comprises 312 residues: MKNRTSVTDFILLGLTDNPQLQVVIFSFLFLTYVLSVTGNLTIISLTLLDSHLKTPMYFFLRNFSLEISFTSVCNPRFLISILTGDKSISYNACAAQLFFFIFLGSTEFFLLASMSYDCYVAICKPLHYTTIMSDRICYQLIISSWLAGFLVIFPPLAMGLQLDFCDSNVIDHFTCDSAPLLQISCTDTSTLELMSFILALFTLISTLILVILSYTYIIRTILRIPSAQQRKKAFSTCSSHVIVVSISYGSCIFMYVKTSAKEGVALTKGVAILNTSVAPMLNPFIYTLRNQQVKQAFKDVLRKISHKKKKH.

Topologically, residues Met1 to Val23 are extracellular. The N-linked (GlcNAc...) asparagine glycan is linked to Asn3. Residues Val24–Ile44 form a helical membrane-spanning segment. Residues Ser45–Met57 lie on the Cytoplasmic side of the membrane. A helical transmembrane segment spans residues Tyr58–Ile80. Topologically, residues Ser81 to Cys94 are extracellular. A disulfide bridge connects residues Cys94 and Cys176. Residues Ala95–Met115 form a helical membrane-spanning segment. At Ser116–Ile142 the chain is on the cytoplasmic side. Residues Ile143 to Leu163 form a helical membrane-spanning segment. The Extracellular segment spans residues Asp164–Met195. Residues Ser196 to Thr216 form a helical membrane-spanning segment. Residues Tyr217 to Cys238 are Cytoplasmic-facing. The chain crosses the membrane as a helical span at residues Ser239–Thr259. At Ser260–Leu267 the chain is on the extracellular side. The helical transmembrane segment at Thr268–Thr288 threads the bilayer. Residues Leu289 to His312 lie on the Cytoplasmic side of the membrane.

The protein belongs to the G-protein coupled receptor 1 family.

The protein localises to the cell membrane. Functionally, odorant receptor. The polypeptide is Olfactory receptor 6C76 (OR6C76) (Homo sapiens (Human)).